A 417-amino-acid chain; its full sequence is NADH-quinone oxidoreductase subunit D (417 aa).

It belongs to the complex I 49 kDa subunit family. In terms of assembly, NDH-1 is composed of 14 different subunits. Subunits NuoB, C, D, E, F, and G constitute the peripheral sector of the complex.

Its subcellular location is the cell inner membrane. It catalyses the reaction a quinone + NADH + 5 H(+)(in) = a quinol + NAD(+) + 4 H(+)(out). NDH-1 shuttles electrons from NADH, via FMN and iron-sulfur (Fe-S) centers, to quinones in the respiratory chain. The immediate electron acceptor for the enzyme in this species is believed to be ubiquinone. Couples the redox reaction to proton translocation (for every two electrons transferred, four hydrogen ions are translocated across the cytoplasmic membrane), and thus conserves the redox energy in a proton gradient. In Cupriavidus taiwanensis (strain DSM 17343 / BCRC 17206 / CCUG 44338 / CIP 107171 / LMG 19424 / R1) (Ralstonia taiwanensis (strain LMG 19424)), this protein is NADH-quinone oxidoreductase subunit D.